Reading from the N-terminus, the 328-residue chain is Beta-ketoacyl-[acyl-carrier-protein] synthase III (328 aa).

Active-site residues include Cys-122 and His-255. Positions 256-260 are ACP-binding; sequence QANVR. Asn-285 is an active-site residue.

The protein belongs to the thiolase-like superfamily. FabH family. Homodimer.

Its subcellular location is the cytoplasm. It catalyses the reaction malonyl-[ACP] + acetyl-CoA + H(+) = 3-oxobutanoyl-[ACP] + CO2 + CoA. The protein operates within lipid metabolism; fatty acid biosynthesis. Functionally, catalyzes the condensation reaction of fatty acid synthesis by the addition to an acyl acceptor of two carbons from malonyl-ACP. Catalyzes the first condensation reaction which initiates fatty acid synthesis and may therefore play a role in governing the total rate of fatty acid production. Possesses both acetoacetyl-ACP synthase and acetyl transacylase activities. Its substrate specificity determines the biosynthesis of branched-chain and/or straight-chain of fatty acids. The polypeptide is Beta-ketoacyl-[acyl-carrier-protein] synthase III (Bordetella avium (strain 197N)).